Here is a 358-residue protein sequence, read N- to C-terminus: MTQKVVVGLSGGVDSSVAAALLHRQGYAVVGVTLWLMKGKGQCCSEGLVDAASICEQLGVPHEIVDTRDLFQNHIIDYLVQGYGEGVTPLPCSQCNKAVKFGPMLQYAQQSLGIDKIATGHYARIRFNEASQRYELLRAVDRQKDQSYFLYDLSQEILAATLFPLGEQTKTVTRQLAAEFDLSTAEKKDSQDLCLIEAHGSMRDFLDKYIAPKAGEIVDLSGAVLGHHEGIHHYTIGQRKGLGIAAAEPLYVVKLDPVMNRVIVGDRQSAGSGECYVQRLNWVSIPEPTAPIRCEVQVRYRSAPVTVNAIPWHDQQIKLVFDEPQFGITPGQAAVLYDGDRVLGGGIICPQKSETAGV.

Residues 8-15 and Leu34 each bind ATP; that span reads GLSGGVDS. Residue Cys95 is the Nucleophile of the active site. The cysteines at positions 95 and 194 are disulfide-linked. Gly120 serves as a coordination point for ATP. The segment at 144–146 is interaction with tRNA; sequence KDQ. Residue Cys194 is the Cysteine persulfide intermediate of the active site. The interaction with tRNA stretch occupies residues 299-300; the sequence is RY.

It belongs to the MnmA/TRMU family.

The protein localises to the cytoplasm. The catalysed reaction is S-sulfanyl-L-cysteinyl-[protein] + uridine(34) in tRNA + AH2 + ATP = 2-thiouridine(34) in tRNA + L-cysteinyl-[protein] + A + AMP + diphosphate + H(+). Its function is as follows. Catalyzes the 2-thiolation of uridine at the wobble position (U34) of tRNA, leading to the formation of s(2)U34. This is tRNA-specific 2-thiouridylase MnmA from Synechocystis sp. (strain ATCC 27184 / PCC 6803 / Kazusa).